We begin with the raw amino-acid sequence, 183 residues long: MKLLFPIFASLMLQYQVNTEFIGLRRCLMGLGRCRDHCNVDEKEIQKCKMKKCCVGPKVVKLIKNYLQYGTPNVLNEDVQEMLKPAKNSSAVIQRKHILSVLPQIKSTSFFANTNFVIIPNATPMNSATISTMTPGQITYTATSTKSNTKESRDSATASSPPAPPPPNILPTPSLELEEAEEQ.

The N-terminal stretch at 1 to 19 (MKLLFPIFASLMLQYQVNT) is a signal peptide. 3 cysteine pairs are disulfide-bonded: Cys-27–Cys-53, Cys-34–Cys-48, and Cys-38–Cys-54. The disordered stretch occupies residues 141–183 (TATSTKSNTKESRDSATASSPPAPPPPNILPTPSLELEEAEEQ). Over residues 161–170 (PPAPPPPNIL) the composition is skewed to pro residues.

Belongs to the beta-defensin family.

Its subcellular location is the secreted. Has antibacterial activity. The protein is Beta-defensin 129 (DEFB129) of Gorilla gorilla gorilla (Western lowland gorilla).